The primary structure comprises 698 residues: Elongation factor G 2 (698 aa).

The region spanning 8-290 (ERYRNIGIMA…AVVDYLPSPV (283 aa)) is the tr-type G domain. Residues 17–24 (AHIDAGKT), 88–92 (DTPGH), and 142–145 (NKMD) contribute to the GTP site.

The protein belongs to the TRAFAC class translation factor GTPase superfamily. Classic translation factor GTPase family. EF-G/EF-2 subfamily.

The protein localises to the cytoplasm. Its function is as follows. Catalyzes the GTP-dependent ribosomal translocation step during translation elongation. During this step, the ribosome changes from the pre-translocational (PRE) to the post-translocational (POST) state as the newly formed A-site-bound peptidyl-tRNA and P-site-bound deacylated tRNA move to the P and E sites, respectively. Catalyzes the coordinated movement of the two tRNA molecules, the mRNA and conformational changes in the ribosome. This is Elongation factor G 2 from Methylococcus capsulatus (strain ATCC 33009 / NCIMB 11132 / Bath).